A 344-amino-acid chain; its full sequence is Aurora kinase B (344 aa).

Phosphothreonine is present on T35. At S62 the chain carries Phosphoserine. Position 64 is a phosphothreonine (T64). A Protein kinase domain is found at 77–327; the sequence is FEIGRPLGKG…LAQVSAHPWV (251 aa). ATP-binding positions include 83 to 91 and K106; that span reads LGKGKFGNV. D200 serves as the catalytic Proton acceptor. K215 carries the post-translational modification N6-acetyllysine. The residue at position 227 (S227) is a Phosphoserine. T232 is subject to Phosphothreonine; by autocatalysis.

This sequence belongs to the protein kinase superfamily. Ser/Thr protein kinase family. Aurora subfamily. Component of the chromosomal passenger complex (CPC) composed of at least BIRC5/survivin, CDCA8/borealin, INCENP, AURKB or AURKC; predominantly independent AURKB- and AURKC-containing complexes exist. Associates with RACGAP1 during M phase. Interacts with SPDYC; this interaction may be required for proper localization of active, Thr-232-phosphorylated AURKB form during prometaphase and metaphase. Interacts with p53/TP53. Interacts (via the middle kinase domain) with NOC2L (via the N- and C-terminus domains). Interacts with CDCA1. Interacts with EVI5. Interacts with JTB. Interacts with NDC80. Interacts with PSMA3. Interacts with RNF2/RING1B. Interacts with SEPTIN1. Interacts with SIRT2. Interacts with TACC1. Interacts with TTC28. The phosphorylation of Thr-232 requires the binding to INCENP and occurs by means of an autophosphorylation mechanism. Thr-232 phosphorylation is indispensable for the AURKB kinase activity. Post-translationally, acetylated at Lys-215 by KAT5 at kinetochores, increasing AURKB activity and promoting accurate chromosome segregation in mitosis. In terms of processing, ubiquitinated by different BCR (BTB-CUL3-RBX1) E3 ubiquitin ligase complexes. Ubiquitinated by the BCR(KLHL9-KLHL13) E3 ubiquitin ligase complex, ubiquitination leads to removal from mitotic chromosomes and is required for cytokinesis. During anaphase, the BCR(KLHL21) E3 ubiquitin ligase complex recruits the CPC complex from chromosomes to the spindle midzone and mediates the ubiquitination of AURKB. Ubiquitination of AURKB by BCR(KLHL21) E3 ubiquitin ligase complex may not lead to its degradation by the proteasome. Deubiquitinated by USP35; inhibiting CDH1-mediated degradation of AURKB.

Its subcellular location is the nucleus. The protein localises to the chromosome. It localises to the centromere. The protein resides in the kinetochore. It is found in the cytoplasm. Its subcellular location is the cytoskeleton. The protein localises to the spindle. It localises to the midbody. The enzyme catalyses L-seryl-[protein] + ATP = O-phospho-L-seryl-[protein] + ADP + H(+). It carries out the reaction L-threonyl-[protein] + ATP = O-phospho-L-threonyl-[protein] + ADP + H(+). With respect to regulation, activity is greatly increased when AURKB is within the CPC complex. In particular, AURKB-phosphorylated INCENP acts as an activator of AURKB. Positive feedback between HASPIN and AURKB contributes to CPC localization. Its function is as follows. Serine/threonine-protein kinase component of the chromosomal passenger complex (CPC), a complex that acts as a key regulator of mitosis. The CPC complex has essential functions at the centromere in ensuring correct chromosome alignment and segregation and is required for chromatin-induced microtubule stabilization and spindle assembly. Involved in the bipolar attachment of spindle microtubules to kinetochores and is a key regulator for the onset of cytokinesis during mitosis. Required for central/midzone spindle assembly and cleavage furrow formation. Key component of the cytokinesis checkpoint, a process required to delay abscission to prevent both premature resolution of intercellular chromosome bridges and accumulation of DNA damage: phosphorylates CHMP4C, leading to retain abscission-competent VPS4 (VPS4A and/or VPS4B) at the midbody ring until abscission checkpoint signaling is terminated at late cytokinesis. AURKB phosphorylates the CPC complex subunits BIRC5/survivin, CDCA8/borealin and INCENP. Phosphorylation of INCENP leads to increased AURKB activity. Other known AURKB substrates involved in centromeric functions and mitosis are CENPA, DES/desmin, GPAF, KIF2C, NSUN2, RACGAP1, SEPTIN1, VIM/vimentin, HASPIN, and histone H3. A positive feedback loop involving HASPIN and AURKB contributes to localization of CPC to centromeres. Phosphorylation of VIM controls vimentin filament segregation in cytokinetic process, whereas histone H3 is phosphorylated at 'Ser-10' and 'Ser-28' during mitosis (H3S10ph and H3S28ph, respectively). AURKB is also required for kinetochore localization of BUB1 and SGO1. Phosphorylation of p53/TP53 negatively regulates its transcriptional activity. Key regulator of active promoters in resting B- and T-lymphocytes: acts by mediating phosphorylation of H3S28ph at active promoters in resting B-cells, inhibiting RNF2/RING1B-mediated ubiquitination of histone H2A and enhancing binding and activity of the USP16 deubiquitinase at transcribed genes. Acts as an inhibitor of CGAS during mitosis: catalyzes phosphorylation of the N-terminus of CGAS during the G2-M transition, blocking CGAS liquid phase separation and activation, and thereby preventing CGAS-induced autoimmunity. Phosphorylates KRT5 during anaphase and telophase. Phosphorylates ATXN10 which promotes phosphorylation of ATXN10 by PLK1 and may play a role in the regulation of cytokinesis and stimulating the proteasomal degradation of ATXN10. The sequence is that of Aurora kinase B (AURKB) from Sus scrofa (Pig).